Here is a 339-residue protein sequence, read N- to C-terminus: HTH-type transcriptional regulator PtxS (339 aa).

Positions 12–67 constitute an HTH lacI-type domain; sequence VTISEVARVAGVSKATVSRYIGGDRQLLAEATAKRLEEVIERLGYRPNQMARGLKR. Positions 14–33 form a DNA-binding region, H-T-H motif; that stretch reads ISEVARVAGVSKATVSRYIG.

As to quaternary structure, homodimer in solution.

Its activity is regulated as follows. 2-ketogluconate acts as a molecular effector and causes dissociation of PtxS from its target promoter. Functionally, negatively regulates glucose metabolism by binding directly to the promoter region of the kgu and gad operons. It also negatively regulates its own synthesis. The polypeptide is HTH-type transcriptional regulator PtxS (Pseudomonas putida (strain ATCC 47054 / DSM 6125 / CFBP 8728 / NCIMB 11950 / KT2440)).